A 213-amino-acid polypeptide reads, in one-letter code: Adenylate kinase (213 aa).

Residue 10-15 (GCGKGT) participates in ATP binding. The segment at 30–59 (STGDLMRKEISLNTRLGLKCQEYMNAGKYV) is NMP. AMP-binding positions include T31, R36, 57-59 (KYV), 83-86 (GYPR), and Q90. Residues 124–161 (NRLVCPLCKASFNLETRKPKQEGLCDFDNTKLVKRSDD) form an LID region. Residue R125 participates in ATP binding. Positions 128 and 131 each coordinate Zn(2+). Residue 134 to 135 (SF) coordinates ATP. 2 residues coordinate Zn(2+): C148 and D151. Positions 158 and 169 each coordinate AMP. D197 serves as a coordination point for ATP.

The protein belongs to the adenylate kinase family. In terms of assembly, monomer.

The protein localises to the cytoplasm. It carries out the reaction AMP + ATP = 2 ADP. It functions in the pathway purine metabolism; AMP biosynthesis via salvage pathway; AMP from ADP: step 1/1. Its function is as follows. Catalyzes the reversible transfer of the terminal phosphate group between ATP and AMP. Plays an important role in cellular energy homeostasis and in adenine nucleotide metabolism. The protein is Adenylate kinase of Mycoplasma mycoides subsp. mycoides SC (strain CCUG 32753 / NCTC 10114 / PG1).